The chain runs to 175 residues: Peptide deformylase (175 aa).

2 residues coordinate Fe cation: Cys-99 and His-141. Residue Glu-142 is part of the active site. His-145 provides a ligand contact to Fe cation.

Belongs to the polypeptide deformylase family. It depends on Fe(2+) as a cofactor.

It catalyses the reaction N-terminal N-formyl-L-methionyl-[peptide] + H2O = N-terminal L-methionyl-[peptide] + formate. Functionally, removes the formyl group from the N-terminal Met of newly synthesized proteins. Requires at least a dipeptide for an efficient rate of reaction. N-terminal L-methionine is a prerequisite for activity but the enzyme has broad specificity at other positions. In Rickettsia prowazekii (strain Madrid E), this protein is Peptide deformylase.